Consider the following 180-residue polypeptide: Signal peptidase complex subunit 3 (180 aa).

The Cytoplasmic portion of the chain corresponds to 1–12 (MHNLLSRANALL). Residues 13–33 (AFTLWVMAAVTAACFLSTVFL) form a helical; Signal-anchor for type II membrane protein membrane-spanning segment. The Lumenal portion of the chain corresponds to 34–180 (DYTVPTKLTV…PTTYTTTRRS (147 aa)). Asn-141 carries an N-linked (GlcNAc...) asparagine glycan.

This sequence belongs to the SPCS3 family. As to quaternary structure, component of the signal peptidase complex (SPC) composed of a catalytic subunit sec-11 and three accessory subunits spcs-1, spcs-2 and spcs-3. The complex induces a local thinning of the ER membrane which is used to measure the length of the signal peptide (SP) h-region of protein substrates. This ensures the selectivity of the complex towards h-regions shorter than 18-20 amino acids.

Its subcellular location is the endoplasmic reticulum membrane. Functionally, essential component of the signal peptidase complex (SPC) which catalyzes the cleavage of N-terminal signal sequences from nascent proteins as they are translocated into the lumen of the endoplasmic reticulum. Essential for the SPC catalytic activity, possibly by stabilizing and positioning the active center of the complex close to the lumenal surface. The chain is Signal peptidase complex subunit 3 from Caenorhabditis elegans.